A 505-amino-acid polypeptide reads, in one-letter code: Glutamate--cysteine ligase (505 aa).

Belongs to the glutamate--cysteine ligase type 1 family. Type 1 subfamily.

The catalysed reaction is L-cysteine + L-glutamate + ATP = gamma-L-glutamyl-L-cysteine + ADP + phosphate + H(+). It functions in the pathway sulfur metabolism; glutathione biosynthesis; glutathione from L-cysteine and L-glutamate: step 1/2. The chain is Glutamate--cysteine ligase from Wigglesworthia glossinidia brevipalpis.